Reading from the N-terminus, the 340-residue chain is Selenide, water dikinase (340 aa).

Residue Sec-17 is part of the active site. A non-standard amino acid (selenocysteine) is located at residue Sec-17. ATP is bound by residues Lys-20 and 45–47 (NNE). Asp-48 is a Mg(2+) binding site. Residues Asp-65, Asp-88, and 136-138 (GHT) contribute to the ATP site. Asp-88 serves as a coordination point for Mg(2+). Asp-224 serves as a coordination point for Mg(2+).

Belongs to the selenophosphate synthase 1 family. Class I subfamily. In terms of assembly, homodimer. The cofactor is Mg(2+).

It catalyses the reaction hydrogenselenide + ATP + H2O = selenophosphate + AMP + phosphate + 2 H(+). Functionally, synthesizes selenophosphate from selenide and ATP. The protein is Selenide, water dikinase of Campylobacter jejuni (strain RM1221).